The primary structure comprises 269 residues: Protein MrkE (269 aa).

Residues 59–173 (KVIIVEDEFL…RIINMLQKLT (115 aa)) form the Response regulatory domain. Asp-110 carries the 4-aspartylphosphate modification. Positions 197–269 (INLIKDERII…VAQVSIANRF (73 aa)) constitute an HTH LytTR-type domain.

In terms of biological role, may be involved in the regulation of fimbrial expression. The protein is Protein MrkE (mrkE) of Klebsiella pneumoniae.